The chain runs to 288 residues: Bifunctional protein FolD (288 aa).

NADP(+)-binding positions include 166–168 (GRS), Ser-191, and Ile-232.

This sequence belongs to the tetrahydrofolate dehydrogenase/cyclohydrolase family. In terms of assembly, homodimer.

It catalyses the reaction (6R)-5,10-methylene-5,6,7,8-tetrahydrofolate + NADP(+) = (6R)-5,10-methenyltetrahydrofolate + NADPH. The catalysed reaction is (6R)-5,10-methenyltetrahydrofolate + H2O = (6R)-10-formyltetrahydrofolate + H(+). Its pathway is one-carbon metabolism; tetrahydrofolate interconversion. In terms of biological role, catalyzes the oxidation of 5,10-methylenetetrahydrofolate to 5,10-methenyltetrahydrofolate and then the hydrolysis of 5,10-methenyltetrahydrofolate to 10-formyltetrahydrofolate. This chain is Bifunctional protein FolD, found in Rickettsia canadensis (strain McKiel).